Reading from the N-terminus, the 37-residue chain is Large ribosomal subunit protein bL36A (37 aa).

Belongs to the bacterial ribosomal protein bL36 family.

This is Large ribosomal subunit protein bL36A from Leifsonia xyli subsp. xyli (strain CTCB07).